A 371-amino-acid chain; its full sequence is Aromatic peroxygenase (371 aa).

An N-terminal signal peptide occupies residues Met-1 to Ala-18. Residues Phe-19–Arg-43 constitute a propeptide that is removed on maturation. Asn-54 carries an N-linked (GlcNAc...) asparagine glycan. Residue Cys-79 participates in heme binding. N-linked (GlcNAc...) asparagine glycans are attached at residues Asn-184, Asn-204, Asn-225, and Asn-329. Cysteines 321 and 362 form a disulfide.

It belongs to the chloroperoxidase family. Requires heme b as cofactor. Post-translationally, N-glycosylated.

The catalysed reaction is RH + H2O2 = ROH + H2O.. In terms of biological role, aromatic peroxidase that oxidizes aryl alcohols into the corresponding aldehydes and then into the corresponding benzoic acids. Oxidizes toluene and naphthalene. Catalyzes the regioselective peroxide-dependent hydroxylation of propranolol and diclofenac to 5-hydroxypropranolol and 4'-hydroxydiclofenac. Catalyzes the regioselective peroxide-dependent hydroxylation of naphthalene to 1-naphthol or 2-naphthol via a naphthalene 1,2-oxide intermediate. Catalyzes the regioselective peroxide-dependent oxidation of pyridine to pyridine N-oxide. Halogenates monochlorodimedone and phenol. Oxidizes the sulfur-containing heterocycle dibenzothiophene to yield ring-hydroxylation products and to a lesser extent sulfoxidation products. The polypeptide is Aromatic peroxygenase (Cyclocybe aegerita (Black poplar mushroom)).